The sequence spans 502 residues: Glycerol kinase (502 aa).

An ADP-binding site is contributed by T14. Positions 14, 15, and 16 each coordinate ATP. Residue T14 participates in sn-glycerol 3-phosphate binding. R18 is an ADP binding site. The sn-glycerol 3-phosphate site is built by R84, E85, and Y136. Glycerol-binding residues include R84, E85, and Y136. Phosphohistidine; by HPr is present on H232. D246 provides a ligand contact to sn-glycerol 3-phosphate. D246 and Q247 together coordinate glycerol. 2 residues coordinate ADP: T268 and G311. ATP is bound by residues T268, G311, Q315, and G412. ADP-binding residues include G412 and N416.

Belongs to the FGGY kinase family. In terms of assembly, homotetramer and homodimer (in equilibrium). In terms of processing, the phosphoenolpyruvate-dependent sugar phosphotransferase system (PTS), including enzyme I, and histidine-containing protein (HPr) are required for the phosphorylation, which leads to the activation of the enzyme.

The catalysed reaction is glycerol + ATP = sn-glycerol 3-phosphate + ADP + H(+). Its pathway is polyol metabolism; glycerol degradation via glycerol kinase pathway; sn-glycerol 3-phosphate from glycerol: step 1/1. Activated by phosphorylation and inhibited by fructose 1,6-bisphosphate (FBP). Key enzyme in the regulation of glycerol uptake and metabolism. Catalyzes the phosphorylation of glycerol to yield sn-glycerol 3-phosphate. The sequence is that of Glycerol kinase from Streptococcus pneumoniae serotype 2 (strain D39 / NCTC 7466).